Here is a 161-residue protein sequence, read N- to C-terminus: MKYDTSELCDIYHEEVNVVEPLFSNFGGRTSFGGQIITVKCFEDNGLLFDLLEENGRGRILLVDGGGSMRRALVDAALARLALQNEWEGIVVYGAVRQVDDLEELDIGIQAIAAIPVGAAGEGIGESDIRVNFGGVTFFSGDHLYADNTGMILSEDPLDIE.

The protein belongs to the RraA family. As to quaternary structure, homotrimer. Binds to both RNA-binding sites in the C-terminal region of Rne and to RhlB.

It localises to the cytoplasm. Functionally, globally modulates RNA abundance by binding to RNase E (Rne) and regulating its endonucleolytic activity. Can modulate Rne action in a substrate-dependent manner by altering the composition of the degradosome. Modulates RNA-binding and helicase activities of the degradosome. In Erwinia tasmaniensis (strain DSM 17950 / CFBP 7177 / CIP 109463 / NCPPB 4357 / Et1/99), this protein is Regulator of ribonuclease activity A.